Here is a 1031-residue protein sequence, read N- to C-terminus: Protein translocase subunit SecA (1031 aa).

ATP is bound by residues Q143, 161–165 (GEGKT), and D661. The segment covering 963–973 (KERLVAKHEES) has biased composition (basic and acidic residues). The tract at residues 963 to 1031 (KERLVAKHEE…GKKYKNCCGR (69 aa)) is disordered. The Zn(2+) site is built by C1017, C1019, C1028, and C1029.

The protein belongs to the SecA family. Monomer and homodimer. Part of the essential Sec protein translocation apparatus which comprises SecA, SecYEG and auxiliary proteins SecDF. Other proteins may also be involved. Requires Zn(2+) as cofactor.

It localises to the cell inner membrane. It is found in the cytoplasm. It catalyses the reaction ATP + H2O + cellular proteinSide 1 = ADP + phosphate + cellular proteinSide 2.. In terms of biological role, part of the Sec protein translocase complex. Interacts with the SecYEG preprotein conducting channel. Has a central role in coupling the hydrolysis of ATP to the transfer of proteins into and across the cell membrane, serving as an ATP-driven molecular motor driving the stepwise translocation of polypeptide chains across the membrane. This chain is Protein translocase subunit SecA, found in Prosthecochloris aestuarii (strain DSM 271 / SK 413).